Reading from the N-terminus, the 134-residue chain is Profilin-2 (134 aa).

Cysteines 13 and 118 form a disulfide. An Involved in PIP2 interaction motif is present at residues 84–100 (AVIRGKKGSGGITIKKT). Thr114 bears the Phosphothreonine mark.

Belongs to the profilin family. Occurs in many kinds of cells as a complex with monomeric actin in a 1:1 ratio. Post-translationally, phosphorylated by MAP kinases.

The protein resides in the cytoplasm. It is found in the cytoskeleton. Binds to actin and affects the structure of the cytoskeleton. At high concentrations, profilin prevents the polymerization of actin, whereas it enhances it at low concentrations. This chain is Profilin-2, found in Olea europaea (Common olive).